Reading from the N-terminus, the 233-residue chain is Gamma-glutamyl-hercynylcysteine sulfoxide hydrolase (233 aa).

The active-site Nucleophile is the Cys2. Positions 2–233 (CRHLGWLGAQ…TALDRAKGPR (232 aa)) constitute a Glutamine amidotransferase type-2 domain.

The catalysed reaction is gamma-L-glutamyl-hercynylcysteine S-oxide + H2O = S-(hercyn-2-yl)-L-cysteine S-oxide + L-glutamate. It participates in amino-acid biosynthesis; ergothioneine biosynthesis. Its function is as follows. Catalyzes the hydrolysis of the gamma-glutamyl amide bond of hercynyl-gamma-L-glutamyl-L-cysteine sulfoxide to produce hercynylcysteine sulfoxide, a step in the biosynthesis pathway of ergothioneine. Ergothioneine is an antioxidant that protects mycobacteria from oxidative stress. In Mycobacterium tuberculosis (strain ATCC 25618 / H37Rv), this protein is Gamma-glutamyl-hercynylcysteine sulfoxide hydrolase (egtC).